Here is a 93-residue protein sequence, read N- to C-terminus: UPF0358 protein ABC2396 (93 aa).

It belongs to the UPF0358 family.

This Shouchella clausii (strain KSM-K16) (Alkalihalobacillus clausii) protein is UPF0358 protein ABC2396.